Reading from the N-terminus, the 239-residue chain is Fatty acid metabolism regulator protein (239 aa).

Residues 6-74 (QSPAGFAEEY…HGKPTKVNNF (69 aa)) form the HTH gntR-type domain. The segment at residues 34–53 (ERELSELIGVTRTTLREVLQ) is a DNA-binding region (H-T-H motif).

Homodimer.

It is found in the cytoplasm. Its function is as follows. Multifunctional regulator of fatty acid metabolism. This chain is Fatty acid metabolism regulator protein, found in Cronobacter sakazakii (strain ATCC BAA-894) (Enterobacter sakazakii).